Reading from the N-terminus, the 605-residue chain is Capsid scaffolding protein (605 aa).

Residues histidine 48, serine 116, and histidine 139 each act as charge relay system in the active site. The disordered stretch occupies residues 235 to 274 (ASDAPDLQKPDKALQSPPPASTDPATMLSGNAGEGATACG). The interaction with pAP stretch occupies residues 281 to 300 (QDLISVPRNTFMTLLQTNLD). 2 disordered regions span residues 403–432 (DYVPAPSRSNKRKRDPEEDEEGGGLFPGED) and 489–588 (PHQS…KSVS). The short motif at 410–416 (RSNKRKR) is the Nuclear localization signal element. Polar residues predominate over residues 568–579 (ASASGVAQSKEP). Residues 585 to 605 (KSVSAHLKSIFCEELLNKRVA) are interaction with major capsid protein.

Belongs to the herpesviridae capsid scaffolding protein family. Homomultimer. Interacts with major capsid protein. In terms of assembly, exists in a monomer-dimer equilibrium with the dimer being the active species. Capsid scaffolding protein is cleaved by assemblin after formation of the spherical procapsid. As a result, the capsid obtains its mature, icosahedral shape. Cleavages occur at two or more sites: release (R-site) and maturation (M-site).

It is found in the host cytoplasm. The protein localises to the host nucleus. It catalyses the reaction Cleaves -Ala-|-Ser- and -Ala-|-Ala- bonds in the scaffold protein.. Functionally, acts as a scaffold protein by binding major capsid protein in the cytoplasm, inducing the nuclear localization of both proteins. Multimerizes in the nucleus such as major capsid protein forms the icosahedral T=16 capsid. Autocatalytic cleavage releases the assembly protein, and subsequently abolishes interaction with major capsid protein. Cleavages products are evicted from the capsid before or during DNA packaging. In terms of biological role, protease that plays an essential role in virion assembly within the nucleus. Catalyzes the cleavage of the assembly protein after formation of the spherical procapsid. By that cleavage, the capsid matures and gains its icosahedral shape. The cleavage sites seem to include -Ala-Ser-, -Ala-Ala-, as well as Ala-Thr bonds. Assemblin and cleavages products are evicted from the capsid before or during DNA packaging. Its function is as follows. Plays a major role in capsid assembly. Acts as a scaffold protein by binding major capsid protein. Multimerizes in the nucleus such as major capsid protein forms the icosahedral T=16 capsid. Cleaved by assemblin after capsid completion. The cleavages products are evicted from the capsid before or during DNA packaging. The protein is Capsid scaffolding protein of Homo sapiens (Human).